We begin with the raw amino-acid sequence, 63 residues long: Large ribosomal subunit protein bL35 (63 aa).

Belongs to the bacterial ribosomal protein bL35 family.

The polypeptide is Large ribosomal subunit protein bL35 (Campylobacter jejuni subsp. jejuni serotype O:2 (strain ATCC 700819 / NCTC 11168)).